The primary structure comprises 2357 residues: Myosin-I heavy chain (2357 aa).

The Myosin motor domain maps to Gln-13–Lys-688. Gly-106–Thr-113 is a binding site for ATP. The actin-binding stretch occupies residues Tyr-579–Asn-586. The IQ domain occupies Leu-691–Ile-720. Positions Lys-787 to Asp-891 form a coiled coil. The interval Lys-787 to Pro-1076 is binding to talin A. 2 disordered regions span residues Ile-797 to Leu-852 and Ala-974 to Pro-1112. 2 stretches are compositionally biased toward low complexity: residues Asn-1003–Ser-1025 and Thr-1078–Asn-1106. Positions Tyr-1155 to Lys-1313 constitute a MyTH4 1 domain. The region spanning Ile-1318 to Ala-1620 is the FERM 1 domain. An SH3 domain is found at Asn-1618–Ser-1678. The tract at residues Val-1686 to Ala-1849 is disordered. Pro residues predominate over residues Thr-1706–Ser-1733. Low complexity-rich tracts occupy residues Val-1734 to Leu-1746 and Ser-1755 to Met-1770. Over residues Phe-1817–Thr-1828 the composition is skewed to polar residues. A MyTH4 2 domain is found at Phe-1894 to Arg-2051. Positions Ser-2060–Gln-2357 constitute an FERM 2 domain.

This sequence belongs to the TRAFAC class myosin-kinesin ATPase superfamily. Myosin family. Monomer. Interacts with talA.

It localises to the cytoplasm. Its function is as follows. Myosins are actin-based motor molecules with ATPase activity. Involved in the early steps of phagocytosis and adhesion. This chain is Myosin-I heavy chain (myoI), found in Dictyostelium discoideum (Social amoeba).